Reading from the N-terminus, the 930-residue chain is Isoleucine--tRNA ligase (930 aa).

The 'HIGH' region signature appears at 57–67 (PYANGNIHVGH). Residue glutamate 554 coordinates L-isoleucyl-5'-AMP. Residues 595–599 (KMSKS) carry the 'KMSKS' region motif. Lysine 598 contributes to the ATP binding site. Residues cysteine 888, cysteine 891, cysteine 908, and cysteine 911 each coordinate Zn(2+).

Belongs to the class-I aminoacyl-tRNA synthetase family. IleS type 1 subfamily. Monomer. The cofactor is Zn(2+).

The protein resides in the cytoplasm. It carries out the reaction tRNA(Ile) + L-isoleucine + ATP = L-isoleucyl-tRNA(Ile) + AMP + diphosphate. Its function is as follows. Catalyzes the attachment of isoleucine to tRNA(Ile). As IleRS can inadvertently accommodate and process structurally similar amino acids such as valine, to avoid such errors it has two additional distinct tRNA(Ile)-dependent editing activities. One activity is designated as 'pretransfer' editing and involves the hydrolysis of activated Val-AMP. The other activity is designated 'posttransfer' editing and involves deacylation of mischarged Val-tRNA(Ile). This chain is Isoleucine--tRNA ligase, found in Streptococcus pneumoniae (strain P1031).